The primary structure comprises 624 residues: Glutamine--fructose-6-phosphate aminotransferase [isomerizing] (624 aa).

The active-site Nucleophile; for GATase activity is the cysteine 2. The Glutamine amidotransferase type-2 domain occupies 2 to 226 (CGIVGYVGQQ…QDQAVVLTAD (225 aa)). 2 SIS domains span residues 297–436 (SDQE…ARGT) and 469–614 (LAQR…VDKP). The active-site For Fru-6P isomerization activity is the lysine 619.

In terms of assembly, homodimer.

It localises to the cytoplasm. It carries out the reaction D-fructose 6-phosphate + L-glutamine = D-glucosamine 6-phosphate + L-glutamate. Catalyzes the first step in hexosamine metabolism, converting fructose-6P into glucosamine-6P using glutamine as a nitrogen source. The sequence is that of Glutamine--fructose-6-phosphate aminotransferase [isomerizing] from Mycolicibacterium paratuberculosis (strain ATCC BAA-968 / K-10) (Mycobacterium paratuberculosis).